The primary structure comprises 110 residues: Nucleoid-associated protein YE3092 (110 aa).

The protein belongs to the YbaB/EbfC family. Homodimer.

The protein localises to the cytoplasm. Its subcellular location is the nucleoid. Functionally, binds to DNA and alters its conformation. May be involved in regulation of gene expression, nucleoid organization and DNA protection. The protein is Nucleoid-associated protein YE3092 of Yersinia enterocolitica serotype O:8 / biotype 1B (strain NCTC 13174 / 8081).